A 439-amino-acid polypeptide reads, in one-letter code: Enolase (439 aa).

Glutamine 163 contacts (2R)-2-phosphoglycerate. Residue glutamate 205 is the Proton donor of the active site. Positions 242, 287, and 314 each coordinate Mg(2+). Lysine 339, arginine 368, serine 369, and lysine 390 together coordinate (2R)-2-phosphoglycerate. Lysine 339 serves as the catalytic Proton acceptor.

It belongs to the enolase family. Mg(2+) is required as a cofactor.

It localises to the cytoplasm. Its subcellular location is the secreted. The protein localises to the cell surface. The catalysed reaction is (2R)-2-phosphoglycerate = phosphoenolpyruvate + H2O. Its pathway is carbohydrate degradation; glycolysis; pyruvate from D-glyceraldehyde 3-phosphate: step 4/5. In terms of biological role, catalyzes the reversible conversion of 2-phosphoglycerate (2-PG) into phosphoenolpyruvate (PEP). It is essential for the degradation of carbohydrates via glycolysis. The polypeptide is Enolase (Levilactobacillus brevis (strain ATCC 367 / BCRC 12310 / CIP 105137 / JCM 1170 / LMG 11437 / NCIMB 947 / NCTC 947) (Lactobacillus brevis)).